We begin with the raw amino-acid sequence, 374 residues long: Pyruvate dehydrogenase E1 component subunit beta-1, mitochondrial (374 aa).

Residues 1–34 (MLGIARRRLGSGCALGQLMQALRPAAAAAAARTY) constitute a mitochondrion transit peptide. Glutamate 97 is a thiamine diphosphate binding site. Positions 150, 198, 199, and 201 each coordinate K(+).

As to quaternary structure, tetramer of 2 alpha and 2 beta subunits. Thiamine diphosphate serves as cofactor.

It is found in the mitochondrion matrix. The enzyme catalyses N(6)-[(R)-lipoyl]-L-lysyl-[protein] + pyruvate + H(+) = N(6)-[(R)-S(8)-acetyldihydrolipoyl]-L-lysyl-[protein] + CO2. Its function is as follows. The pyruvate dehydrogenase complex catalyzes the overall conversion of pyruvate to acetyl-CoA and CO(2). It contains multiple copies of three enzymatic components: pyruvate dehydrogenase (E1), dihydrolipoamide acetyltransferase (E2) and lipoamide dehydrogenase (E3). This chain is Pyruvate dehydrogenase E1 component subunit beta-1, mitochondrial, found in Oryza sativa subsp. japonica (Rice).